We begin with the raw amino-acid sequence, 259 residues long: uncharacterized protein (259 aa).

Positions methionine 1–threonine 19 form a signal peptide, or 26. Glycine 214–threonine 221 provides a ligand contact to ATP.

This is an uncharacterized protein from Bacillus subtilis (strain 168).